Here is a 322-residue protein sequence, read N- to C-terminus: Thymidylate synthase (322 aa).

DUMP is bound by residues arginine 25 and 184-185 (RR). Catalysis depends on cysteine 204, which acts as the Nucleophile. DUMP contacts are provided by residues 224–227 (RSGD), asparagine 235, and 265–267 (HIY). Aspartate 227 contacts (6R)-5,10-methylene-5,6,7,8-tetrahydrofolate. Position 321 (alanine 321) interacts with (6R)-5,10-methylene-5,6,7,8-tetrahydrofolate.

Belongs to the thymidylate synthase family. Bacterial-type ThyA subfamily. As to quaternary structure, homodimer.

The protein resides in the cytoplasm. The enzyme catalyses dUMP + (6R)-5,10-methylene-5,6,7,8-tetrahydrofolate = 7,8-dihydrofolate + dTMP. It functions in the pathway pyrimidine metabolism; dTTP biosynthesis. Functionally, catalyzes the reductive methylation of 2'-deoxyuridine-5'-monophosphate (dUMP) to 2'-deoxythymidine-5'-monophosphate (dTMP) while utilizing 5,10-methylenetetrahydrofolate (mTHF) as the methyl donor and reductant in the reaction, yielding dihydrofolate (DHF) as a by-product. This enzymatic reaction provides an intracellular de novo source of dTMP, an essential precursor for DNA biosynthesis. The sequence is that of Thymidylate synthase from Leuconostoc mesenteroides subsp. mesenteroides (strain ATCC 8293 / DSM 20343 / BCRC 11652 / CCM 1803 / JCM 6124 / NCDO 523 / NBRC 100496 / NCIMB 8023 / NCTC 12954 / NRRL B-1118 / 37Y).